We begin with the raw amino-acid sequence, 154 residues long: Cindoxin (154 aa).

One can recognise a Flavodoxin-like domain in the interval 3-145 (ALILYGTETG…TAEEWAREIL (143 aa)). FMN-binding positions include 9–13 (TETGN) and 89–120 (VFGL…TQVG).

Requires FMN as cofactor.

In terms of biological role, involved in the degradation of cineol (eucalyptol). The FMN protein, cindoxin, shuttles electrons between the FAD-containing cindoxin reductase (CinB) and 1,8-cineole 2-endo-monooxygenase (CinA). The protein is Cindoxin (cinC) of Citrobacter braakii.